A 1208-amino-acid chain; its full sequence is MDSLPDEFFVRHPAVEDQRKEETENKLEKSSGQLNKQENDIPTDLVPVNLLLEVKKLLNAINTLPKGVVPHIKKFLQEDFSFQTMQREVAANSQNGEEIVPALTLRFLITQLEAALRNIQAGNYTAHQINIGYYLTLLFLYGVALTERGKKEDYTEAENKFLVMKMMIQENEICENFMSLVYFGRGLLRCAQKRYNGGLLEFHKSLQEIGDKNDHWFDIDPTEDEDLPTTFKDLLNNFIKTTESNIMKQTICSYLDCERSCEADILKNTSYKGFFQLMCSKSCCVYFHKICWKKFKNLKYPGENDQSFSGKKCLKEGCTGDMVRMLQCDVPGIVKILFEVVRKDEYITIENLGASYRKLISLKITDTDIRPKISLKFNTKDEMPIFKLDYNYFYHLLHIIIISGTDIVRQIFDEAMPPPLLKKELLIHKNVLESYYNHLWTNHPLGGSWHLLYPPNKELPQSKQFDLCLLLALIKHLNVFPAPKKGWNMEPPSSDISKSADILRLCKYRDILLSEILMNGLTESQFNSIWKKVSDILLRLGMMQEDIDKVKENPIENISLDYHQLSVYLGIPVPEIIQRMLSCYQQGIALQSITGSQRIEIEELQNEEEELSPPLMEYNINVKSHPEIQFAEINKDGTSIPSESSTESLKDLQEVKSKQRKKKKTKNKKNKDSKEDQVPYVVEKEEQLRKEQANPHSVSRLIKDDASDVQEDSAMEDKFYSLDELHILDMIEQGSAGKVTTDYGETEKERLARQRQLYKLHYQCEDFKRQLRTVTFRWQENQMQIKKKDKIIASLNQQVAFGINKVSKLQRQIHAKDNEIKNLKEQLSMKRSQWEMEKHNLESTMKTYVSKLNAETSRALTAEVYFLQCRRDFGLLHLEQTEKECLNQLARVTHMAASNLESLQLKAAVDSWNAIVADVRNKIAFLRTQYNEQINKVKQGFALSTLPPVQLPPPPPSPEILMQQFLGRPLVKESFFRPILTVPQMPAVCPGVVSATGQPRAPLMTGIAWALPAPVGDAVPPSAGLRSDPSIMNWERITDRLKTAFPQQTRKELTDFLRKLKDAYGKSLSELTFDEIVCKISQFIDPKKSQSQGKSVSNVNCVSPSHSPSQPDAAQPPKPAWRPLTSQGPATWEGASNPDEEEEEEEPCVICHENLSPENLSVLPCAHKFHAQCIRPWLMQQGTCPTCRLHVLLPEEFPGHPSRQLPKI.

The span at 10-29 (VRHPAVEDQRKEETENKLEK) shows a compositional bias: basic and acidic residues. Disordered stretches follow at residues 10–38 (VRHP…NKQE) and 637–698 (GTSI…PHSV). Coiled coils occupy residues 14-43 (AVED…DIPT), 647-676 (ESLK…SKED), 792-853 (IASL…SKLN), and 904-939 (QLKA…KVKQ). Residues 637 to 647 (GTSIPSESSTE) show a composition bias toward polar residues. Over residues 648 to 657 (SLKDLQEVKS) the composition is skewed to basic and acidic residues. The span at 658–669 (KQRKKKKTKNKK) shows a compositional bias: basic residues. A compositionally biased stretch (basic and acidic residues) spans 670–693 (NKDSKEDQVPYVVEKEEQLRKEQA). The interval 1088–1145 (KSQSQGKSVSNVNCVSPSHSPSQPDAAQPPKPAWRPLTSQGPATWEGASNPDEEEEEE) is disordered. Positions 1089 to 1112 (SQSQGKSVSNVNCVSPSHSPSQPD) are enriched in polar residues. The RING-type; atypical zinc finger occupies 1148 to 1188 (CVICHENLSPENLSVLPCAHKFHAQCIRPWLMQQGTCPTCR).

As to quaternary structure, interacts with DAZ proteins. Widely expressed at low level. Highly expressed in skeletal muscle, kidney and heart. Expressed at low level in placenta, lung, brain, liver and pancreas.

The protein localises to the cytoplasm. It carries out the reaction S-ubiquitinyl-[E2 ubiquitin-conjugating enzyme]-L-cysteine + [acceptor protein]-L-lysine = [E2 ubiquitin-conjugating enzyme]-L-cysteine + N(6)-ubiquitinyl-[acceptor protein]-L-lysine.. It functions in the pathway protein modification; protein ubiquitination. E3 Ubiquitin ligase proteins mediate ubiquitination and subsequent proteasomal degradation of target proteins. E3 ubiquitin ligases accept ubiquitin from an E2 ubiquitin-conjugating enzyme in the form of a thioester and then directly transfers the ubiquitin to targeted substrates. Able to specifically bind RNA. The protein is E3 ubiquitin-protein ligase DZIP3 (DZIP3) of Homo sapiens (Human).